Consider the following 356-residue polypeptide: Inositol phosphoceramide mannosyltransferase 3 (356 aa).

The chain crosses the membrane as a helical span at residues 4-24 (ILFYFFFFLTLILSATVYLFG). 2 N-linked (GlcNAc...) asparagine glycosylation sites follow: Asn52 and Asn146. A run of 2 helical transmembrane segments spans residues 197 to 217 (FPYLTVMYSTGPLFLSIIWSA) and 269 to 289 (WAIFTFLGFLTFFIVVYFIFG). Phosphoserine is present on residues Ser307, Ser353, and Ser355.

It belongs to the glycosyltransferase 32 family.

It is found in the endoplasmic reticulum membrane. The protein localises to the golgi apparatus. Its subcellular location is the cis-Golgi network membrane. It localises to the trans-Golgi network membrane. Functionally, with imt1 and imt2, is required for the synthesis of mannosylinositol phosphoceramide (MIPC). Catalyzes the addition of mannosyl to inositol phosphoceramide (IPC). MIPC is essential for cell morphology, cell-surface distribution of ergosterol, localization for plasma-membrane transporters, and lipid-raft-mediated endocytosis of plasma membrane proteins to the vacuole. This Schizosaccharomyces pombe (strain 972 / ATCC 24843) (Fission yeast) protein is Inositol phosphoceramide mannosyltransferase 3.